The following is a 211-amino-acid chain: Large ribosomal subunit protein bL25 (211 aa).

The protein belongs to the bacterial ribosomal protein bL25 family. CTC subfamily. As to quaternary structure, part of the 50S ribosomal subunit; part of the 5S rRNA/L5/L18/L25 subcomplex. Contacts the 5S rRNA. Binds to the 5S rRNA independently of L5 and L18.

In terms of biological role, this is one of the proteins that binds to the 5S RNA in the ribosome where it forms part of the central protuberance. In Methylobacterium nodulans (strain LMG 21967 / CNCM I-2342 / ORS 2060), this protein is Large ribosomal subunit protein bL25.